Consider the following 430-residue polypeptide: MQEESSKELYSKAVKLIPGGVNSPVRACRNVGCEPVFIESAKGAYLTTVDGQELLDFVLSWGAIILGHTNSTVTNAIKKAASNGTTFGAPCKAEVLLAKEIIDAFPGMDMIRMVSSGTEATMSALRLARGVTGRNKVLKFIGCYHGHADPFLASAGSGVATLSIPGTPGVPEVTVRDTLLAPYNDLSTVKDLFVMYGKDLAAVFVEPIAANMGLIPPKEGFLKGLRALCDAHGTLLIMDEVITGFRVAYGGAQTRFDITPDLTTLGKIIGGGLPIGAYGGKAKYMEHIAPLGEIYQAGTLSGNPLVMTAGFETLQLLKDINYTILEKQVATFANELEVILKDKGVPVQVSNFASMFTVFFTNNELKSFDDVKTTNTQLYSILFRSMQKNNIFLVPSPFETNMVSFAHKEKEFEKALIAAKKIMFNITDVN.

Lysine 267 bears the N6-(pyridoxal phosphate)lysine mark.

It belongs to the class-III pyridoxal-phosphate-dependent aminotransferase family. HemL subfamily. In terms of assembly, homodimer. Pyridoxal 5'-phosphate is required as a cofactor.

Its subcellular location is the cytoplasm. The enzyme catalyses (S)-4-amino-5-oxopentanoate = 5-aminolevulinate. It functions in the pathway porphyrin-containing compound metabolism; protoporphyrin-IX biosynthesis; 5-aminolevulinate from L-glutamyl-tRNA(Glu): step 2/2. This Lawsonia intracellularis (strain PHE/MN1-00) protein is Glutamate-1-semialdehyde 2,1-aminomutase.